The following is a 523-amino-acid chain: Heparanase (523 aa).

A signal peptide spans 1–18 (MLVLLLLVLLLAVPPRRT). Residues 42–44 (DAS), T77, and 137–141 (KKHKN) each bind heparan sulfate group. Residues N141 and N196 are each glycosylated (N-linked (GlcNAc...) asparagine). E204 serves as the catalytic Proton donor. Heparan sulfate group contacts are provided by residues 250–260 (QPRKHTQHLLR), H276, and R283. A required for heterodimerization with the heparanase 8 kDa subunit region spans residues 268–397 (KAIDSVTWHH…LLYKRLVGTR (130 aa)). E323 (nucleophile) is an active-site residue. Heparan sulfate group-binding positions include 328–330 (YGG) and 369–371 (GSY). C417 and C522 are joined by a disulfide. Residues N436 and N439 are each glycosylated (N-linked (GlcNAc...) asparagine). The required for transferring proheparanase to the Golgi apparatus, secretion and subsequent enzyme activity and for enhancement of PKB/AKT1 phosphorylation stretch occupies residues 507 to 523 (FSYGFYVIRNAKAIACI).

This sequence belongs to the glycosyl hydrolase 79 family. In terms of assembly, heterodimer; the active enzyme is a heterodimer of the 60 kDa and 45 kDa proteolytic products. In terms of processing, N-glycosylated. Post-translationally, proteolytically cleaved to produce a 60 kDa and a 45 kDa product.

It localises to the secreted. The catalysed reaction is endohydrolysis of (1-&gt;4)-beta-D-glycosidic bonds of heparan sulfate chains in heparan sulfate proteoglycan.. In terms of biological role, endoglycosidase that cleaves heparan sulfate proteoglycans (HSPGs) into heparan sulfate side chains and core proteoglycans. Participates in extracellular matrix (ECM) degradation and remodeling. Selectively cleaves the linkage between a glucuronic acid unit and an N-sulfo glucosamine unit carrying either a 3-O-sulfo or a 6-O-sulfo group. Can also cleave the linkage between a glucuronic acid unit and an N-sulfo glucosamine unit carrying a 2-O-sulfo group, but not linkages between a glucuronic acid unit and a 2-O-sulfated iduronic acid moiety. Increases cell adhesion to the extracellular matrix (ECM), independent of its enzymatic activity. This chain is Heparanase (HPSE), found in Gallus gallus (Chicken).